We begin with the raw amino-acid sequence, 105 residues long: Phosphoribosyl-AMP cyclohydrolase (105 aa).

Position 72 (Asp72) interacts with Mg(2+). Cys73 contacts Zn(2+). The Mg(2+) site is built by Asp74 and Asp76. Residues Cys89 and Cys96 each contribute to the Zn(2+) site.

The protein belongs to the PRA-CH family. Homodimer. Requires Mg(2+) as cofactor. Zn(2+) is required as a cofactor.

Its subcellular location is the cytoplasm. The catalysed reaction is 1-(5-phospho-beta-D-ribosyl)-5'-AMP + H2O = 1-(5-phospho-beta-D-ribosyl)-5-[(5-phospho-beta-D-ribosylamino)methylideneamino]imidazole-4-carboxamide. The protein operates within amino-acid biosynthesis; L-histidine biosynthesis; L-histidine from 5-phospho-alpha-D-ribose 1-diphosphate: step 3/9. Catalyzes the hydrolysis of the adenine ring of phosphoribosyl-AMP. This chain is Phosphoribosyl-AMP cyclohydrolase, found in Listeria monocytogenes serotype 4b (strain CLIP80459).